A 179-amino-acid polypeptide reads, in one-letter code: Large ribosomal subunit protein uL6 (179 aa).

It belongs to the universal ribosomal protein uL6 family. Part of the 50S ribosomal subunit.

Its function is as follows. This protein binds to the 23S rRNA, and is important in its secondary structure. It is located near the subunit interface in the base of the L7/L12 stalk, and near the tRNA binding site of the peptidyltransferase center. This Methylacidiphilum infernorum (isolate V4) (Methylokorus infernorum (strain V4)) protein is Large ribosomal subunit protein uL6.